The chain runs to 281 residues: Deoxyribonuclease-1 (281 aa).

The first 21 residues, 1–21 (MRSEMLTALLTLAVLLQVAGS), serve as a signal peptide directing secretion. Asn39 is a glycosylation site (N-linked (GlcNAc...) asparagine). Residue Glu99 is part of the active site. Cysteines 122 and 125 form a disulfide. His155 is an active-site residue.

Belongs to the DNase I family. It depends on Ca(2+) as a cofactor. Requires Mg(2+) as cofactor. In terms of tissue distribution, equivalent levels in pancreas and parotid gland, low amounts in kidney, liver, small intestine, stomach and thymus.

The protein localises to the secreted. The protein resides in the zymogen granule. Its subcellular location is the nucleus envelope. The enzyme catalyses Endonucleolytic cleavage to 5'-phosphodinucleotide and 5'-phosphooligonucleotide end-products.. Its function is as follows. Serum endocuclease secreted into body fluids by a wide variety of exocrine and endocrine organs. Expressed by non-hematopoietic tissues and preferentially cleaves protein-free DNA. Among other functions, seems to be involved in cell death by apoptosis. Binds specifically to G-actin and blocks actin polymerization. Preferentially attacks double-stranded DNA and produces oligonucleotides with 5'-phospho and 3'-hydroxy termini. Together with DNASE1L3, plays a key role in degrading neutrophil extracellular traps (NETs). NETs are mainly composed of DNA fibers and are released by neutrophils to bind pathogens during inflammation. Degradation of intravascular NETs by DNASE1 and DNASE1L3 is required to prevent formation of clots that obstruct blood vessels and cause organ damage following inflammation. In Oryctolagus cuniculus (Rabbit), this protein is Deoxyribonuclease-1 (DNASE1).